The following is a 765-amino-acid chain: Myotubularin-related protein 10-A (765 aa).

The region spanning 209–650 is the Myotubularin phosphatase domain; sequence FETYSDWDRE…THIKLWKLCY (442 aa).

Belongs to the protein-tyrosine phosphatase family. Non-receptor class myotubularin subfamily.

This chain is Myotubularin-related protein 10-A (mtmr10-a), found in Xenopus laevis (African clawed frog).